The sequence spans 217 residues: 3,4-dihydroxy-2-butanone 4-phosphate synthase (217 aa).

Residues 37-38 (RE), Asp42, 150-154 (RRGHT), and Glu174 each bind D-ribulose 5-phosphate. Glu38 provides a ligand contact to Mg(2+). Mg(2+) is bound at residue His153.

This sequence belongs to the DHBP synthase family. As to quaternary structure, homodimer. Mg(2+) serves as cofactor. It depends on Mn(2+) as a cofactor.

The enzyme catalyses D-ribulose 5-phosphate = (2S)-2-hydroxy-3-oxobutyl phosphate + formate + H(+). It participates in cofactor biosynthesis; riboflavin biosynthesis; 2-hydroxy-3-oxobutyl phosphate from D-ribulose 5-phosphate: step 1/1. In terms of biological role, catalyzes the conversion of D-ribulose 5-phosphate to formate and 3,4-dihydroxy-2-butanone 4-phosphate. This is 3,4-dihydroxy-2-butanone 4-phosphate synthase from Serratia proteamaculans (strain 568).